Consider the following 264-residue polypeptide: MKQYLQLLEDILQNGVYKDDRTGTGTLSVFGRQLRFDLREGFPLLTTKKLHIRSIIHELLWFLSGDTNIRYLKENGVTIWDEWADEKGDLGPVYGAQWRSWRGADGRTIDQISEVIEQIKTNPNSRRLLVSAWNVAELDHMKLPPCHYAFQFYVENGTLSCMWQQRSVDTFLGLPFNIASYALLTYMVAQQCDLQPKELIFTGGDVHLYMNHIEQAKLQLTREPRPLPKLIIKRKPASIFEYRFEDFEIVDYDPHPHIKADVSV.

Arg-21 serves as a coordination point for dUMP. Position 51 (His-51) interacts with (6R)-5,10-methylene-5,6,7,8-tetrahydrofolate. Arg-126–Arg-127 provides a ligand contact to dUMP. The active-site Nucleophile is Cys-146. DUMP contacts are provided by residues Arg-166–Asp-169, Asn-177, and His-207–Tyr-209. Asp-169 provides a ligand contact to (6R)-5,10-methylene-5,6,7,8-tetrahydrofolate. Residue Ser-263 participates in (6R)-5,10-methylene-5,6,7,8-tetrahydrofolate binding.

This sequence belongs to the thymidylate synthase family. Bacterial-type ThyA subfamily. In terms of assembly, homodimer.

The protein localises to the cytoplasm. It carries out the reaction dUMP + (6R)-5,10-methylene-5,6,7,8-tetrahydrofolate = 7,8-dihydrofolate + dTMP. It participates in pyrimidine metabolism; dTTP biosynthesis. Catalyzes the reductive methylation of 2'-deoxyuridine-5'-monophosphate (dUMP) to 2'-deoxythymidine-5'-monophosphate (dTMP) while utilizing 5,10-methylenetetrahydrofolate (mTHF) as the methyl donor and reductant in the reaction, yielding dihydrofolate (DHF) as a by-product. This enzymatic reaction provides an intracellular de novo source of dTMP, an essential precursor for DNA biosynthesis. This is Thymidylate synthase from Anoxybacillus flavithermus (strain DSM 21510 / WK1).